The primary structure comprises 33 residues: Photosystem II reaction center protein Psb30 (33 aa).

Residues 5 to 25 (ILAQLTALAFIVVSGPLVIAL) traverse the membrane as a helical segment.

It belongs to the Psb30/Ycf12 family. In terms of assembly, PSII is composed of 1 copy each of membrane proteins PsbA, PsbB, PsbC, PsbD, PsbE, PsbF, PsbH, PsbI, PsbJ, PsbK, PsbL, PsbM, PsbT, PsbX, PsbY, PsbZ, Psb30/Ycf12, peripheral proteins of the oxygen-evolving complex and a large number of cofactors. It forms dimeric complexes.

The protein localises to the plastid. The protein resides in the chloroplast thylakoid membrane. A core subunit of photosystem II (PSII), probably helps stabilize the reaction center. This is Photosystem II reaction center protein Psb30 from Chaetosphaeridium globosum (Charophycean green alga).